Here is a 254-residue protein sequence, read N- to C-terminus: MLPWQRQVPTSIFPQSNEQVFRMMLAQQHLQLQNFLQQRKMALLAMNPEIPMITDLKKAKFDFTHMADSIESEQKIKEESVSPKMSPTLTTAAVRPFVPYDQPWFMIPGRGRTTGRAARPKKEFICKYCDRHFTKSYNLLIHERTHTDERPYSCDVCGKAFRRQDHLRDHKYIHQKDRPFKCEICGKGFCQSRTLLVHRATHDPNRHSIGAPVVPIKSETPLPELDPRVTLILQNLTDSFNSTSMTSPQISPDR.

C2H2-type zinc fingers lie at residues 124–146 (FICK…ERTH), 152–174 (YSCD…KYIH), and 180–202 (FKCE…RATH).

This sequence belongs to the Odd C2H2-type zinc-finger protein family.

It localises to the nucleus. Its function is as follows. May function as transcription regulator. Required for morphogenesis and function of the digestive tract. This Caenorhabditis elegans protein is Protein odd-skipped-related 2.